Consider the following 289-residue polypeptide: Splicing factor C9orf78 (289 aa).

Over residues Met-1 to Arg-12 the composition is skewed to basic residues. A disordered region spans residues Met-1 to Val-27. The segment at Arg-5–Val-58 is interaction with SNRNP200. A phosphoserine mark is found at Ser-15 and Ser-17. At Tyr-147 the chain carries Phosphotyrosine. The segment covering Leu-232 to Lys-283 has biased composition (basic and acidic residues). The interval Leu-232 to Tyr-289 is disordered. At Thr-253 the chain carries Phosphothreonine. Ser-261 is subject to Phosphoserine.

Belongs to the TLS1 family. Component of the spliceosome. Interacts with SNRNP200; the interaction is direct. Interacts with PRPF8.

It localises to the nucleus. The protein localises to the chromosome. It is found in the centromere. Its function is as follows. Plays a role in pre-mRNA splicing by promoting usage of the upstream 3'-splice site at alternative NAGNAG splice sites; these are sites featuring alternative acceptor motifs separated by only a few nucleotides. May also modulate exon inclusion events. Plays a role in spliceosomal remodeling by displacing WBP4 from SNRNP200 and may act to inhibit SNRNP200 helicase activity. Binds U5 snRNA. Required for proper chromosome segregation. Not required for splicing of shelterin components. The protein is Splicing factor C9orf78 (C9orf78) of Homo sapiens (Human).